Reading from the N-terminus, the 529-residue chain is CTP synthase (529 aa).

Residues 1-266 form an amidoligase domain region; it reads MTKYIIVTGG…TKKIFNKLGL (266 aa). CTP is bound at residue serine 13. Residue serine 13 coordinates UTP. An ATP-binding site is contributed by 14-19; that stretch reads SVGKGT. Tyrosine 54 serves as a coordination point for L-glutamine. Aspartate 71 is a binding site for ATP. The Mg(2+) site is built by aspartate 71 and glutamate 141. Residues 148 to 150, 187 to 192, and lysine 223 contribute to the CTP site; these read DIE and KTKPLQ. Residues 187–192 and lysine 223 each bind UTP; that span reads KTKPLQ. In terms of domain architecture, Glutamine amidotransferase type-1 spans 291 to 529; sequence KIALVGKYTK…FLNFLSVASA (239 aa). An L-glutamine-binding site is contributed by glycine 354. Residue cysteine 381 is the Nucleophile; for glutamine hydrolysis of the active site. Residues 382-385, glutamate 405, and arginine 462 each bind L-glutamine; that span reads FGMQ. Residues histidine 506 and glutamate 508 contribute to the active site.

This sequence belongs to the CTP synthase family. As to quaternary structure, homotetramer.

The catalysed reaction is UTP + L-glutamine + ATP + H2O = CTP + L-glutamate + ADP + phosphate + 2 H(+). It catalyses the reaction L-glutamine + H2O = L-glutamate + NH4(+). The enzyme catalyses UTP + NH4(+) + ATP = CTP + ADP + phosphate + 2 H(+). It participates in pyrimidine metabolism; CTP biosynthesis via de novo pathway; CTP from UDP: step 2/2. Allosterically activated by GTP, when glutamine is the substrate; GTP has no effect on the reaction when ammonia is the substrate. The allosteric effector GTP functions by stabilizing the protein conformation that binds the tetrahedral intermediate(s) formed during glutamine hydrolysis. Inhibited by the product CTP, via allosteric rather than competitive inhibition. Its function is as follows. Catalyzes the ATP-dependent amination of UTP to CTP with either L-glutamine or ammonia as the source of nitrogen. Regulates intracellular CTP levels through interactions with the four ribonucleotide triphosphates. The protein is CTP synthase of Sulfolobus acidocaldarius (strain ATCC 33909 / DSM 639 / JCM 8929 / NBRC 15157 / NCIMB 11770).